The primary structure comprises 600 residues: Leiomodin-1 (600 aa).

Position 12 is a phosphoserine (serine 12). Disordered stretches follow at residues 38 to 61, 80 to 324, and 472 to 573; these read VVDPDGSVPVGLRQRNQTEKQSTG, MQRE…PLER, and DKQR…QEKN. Composition is skewed to basic and acidic residues over residues 80–127, 134–240, 247–256, 263–292, and 472–497; these read MQRE…EPKR, FSRD…EKMK, DMKKEDEKVK, DTKKDDEKVKKNEPLHEKEAKDDSKTKTPE, and DKQRQKRLQEQRQAQEAKGEKKDLLE. Serine 85 and serine 135 each carry phosphoserine. 8 repeat units span residues 165–180, 181–196, 197–212, 213–228, 229–244, 245–260, 261–276, and 277–293. Positions 165–293 are 8 X approximate tandem repeats; the sequence is AAVDKKEAGK…DDSKTKTPEK (129 aa). A 5 X 4 AA approximate tandem repeats region spans residues 508–527; that stretch reads SPKPSPQPSPKPSPKNSPKK. 2 stretches are compositionally biased toward pro residues: residues 510-522 and 532-543; these read KPSPQPSPKPSPK and AAPPPPPPPLAP. Position 555 is a phosphoserine (serine 555). One can recognise a WH2 domain in the interval 574 to 593; the sequence is SRDQLLAAIRSSNLKQLKKV.

It belongs to the tropomodulin family. In terms of tissue distribution, detected in lung vascular smooth muscle (at protein level). Detected in thyroid and extraocular smooth muscle, but not skeletal muscle. Detected in heart, aorta, skeletal muscle, colon, urinary bladder, uterus, stomach, and small intestine.

It localises to the cytoplasm. Its subcellular location is the myofibril. The protein resides in the sarcomere. The protein localises to the cytoskeleton. Required for proper contractility of visceral smooth muscle cells. Mediates nucleation of actin filaments. This is Leiomodin-1 (LMOD1) from Homo sapiens (Human).